Reading from the N-terminus, the 553-residue chain is MPSHLIKSGISKAPHRSLLKALGITDNELKRPFIGVVHSFSEIVPGHVHLRTVVEAVKAGVRTAGGVPFELPVIGVCDGIAMNHEGMKYSLASRELIADSVEVMVKAHQFDALVFVPNCDKIVPGMLIAAMRLNLPAIFVSGGPMLAGRVRGKSVSLSNVFEGVGAVAAGLMSEEELLEYENYACPGCGSCAGMFTANSMNCLTEAIGMALPGNGTIPAVYAERLRLAKLSGEKVMELLSQNIRPRDIFTRESLLNGLAVDMALGCSTNTVLHLAAVAYEAGVEFDLNLVNEVSERTPNLCRLSPAGPHHMEDLYFAGGIPAVMKELSKKGLIREDLLTVSGKTVGENLKNAVNKNPEVIRPIDNPYSETGGLAILFGTLAPRGAVVKKSAVLPEMLTHTGPARVFDSEEDATTAILTGQIKKGDVVVIRYEGPKGGPGMREMLTPTSALAGMGLDKDVALITDGRFSGATRGAAIGHVSPEGYEGGPIALVREGDLIKIDIPGQRLDLLVSEEELNQRKARLQIPEPKIKEGYLARYQKLVSSANLGAVFLK.

Asp-78 provides a ligand contact to Mg(2+). Cys-119 is a [2Fe-2S] cluster binding site. Positions 120 and 121 each coordinate Mg(2+). At Lys-121 the chain carries N6-carboxylysine. Cys-191 is a binding site for [2Fe-2S] cluster. Glu-442 contacts Mg(2+). Ser-468 (proton acceptor) is an active-site residue.

It belongs to the IlvD/Edd family. In terms of assembly, homodimer. [2Fe-2S] cluster is required as a cofactor. It depends on Mg(2+) as a cofactor.

The enzyme catalyses (2R)-2,3-dihydroxy-3-methylbutanoate = 3-methyl-2-oxobutanoate + H2O. It carries out the reaction (2R,3R)-2,3-dihydroxy-3-methylpentanoate = (S)-3-methyl-2-oxopentanoate + H2O. It participates in amino-acid biosynthesis; L-isoleucine biosynthesis; L-isoleucine from 2-oxobutanoate: step 3/4. The protein operates within amino-acid biosynthesis; L-valine biosynthesis; L-valine from pyruvate: step 3/4. In terms of biological role, functions in the biosynthesis of branched-chain amino acids. Catalyzes the dehydration of (2R,3R)-2,3-dihydroxy-3-methylpentanoate (2,3-dihydroxy-3-methylvalerate) into 2-oxo-3-methylpentanoate (2-oxo-3-methylvalerate) and of (2R)-2,3-dihydroxy-3-methylbutanoate (2,3-dihydroxyisovalerate) into 2-oxo-3-methylbutanoate (2-oxoisovalerate), the penultimate precursor to L-isoleucine and L-valine, respectively. The polypeptide is Dihydroxy-acid dehydratase (Carboxydothermus hydrogenoformans (strain ATCC BAA-161 / DSM 6008 / Z-2901)).